The chain runs to 393 residues: Golgi membrane protein 1 (393 aa).

M1 is subject to N-acetylmethionine. Over 1 to 12 the chain is Cytoplasmic; it reads MMGLGNGRRSMK. Residues 13 to 35 traverse the membrane as a helical; Signal-anchor for type II membrane protein segment; the sequence is SPPLILAALVACVIVLGFNYWIA. Residues 36–393 lie on the Lumenal side of the membrane; it reads SSRSVELQTR…QVGIHIPQQA (358 aa). Residues 40-183 are a coiled coil; it reads VELQTRIVEL…IEEVIRKRNE (144 aa). 2 N-linked (GlcNAc...) asparagine glycosylation sites follow: N109 and N144. Disordered stretches follow at residues 180 to 247 and 284 to 352; these read KRNE…QVQN and HTQL…LAGN. S187 bears the Phosphoserine mark. Polar residues-rich tracts occupy residues 192-201 and 227-247; these read ETNNQHQQAL and NKSQ…QVQN. N227 carries an N-linked (GlcNAc...) asparagine glycan. Residues 294-320 are compositionally biased toward basic and acidic residues; it reads RPEEDSQYPEREQLVIRDRQEQQRASE. The span at 330-339 shows a compositional bias: acidic residues; that stretch reads DEYDMDENEA.

The protein belongs to the GOLM family. As to quaternary structure, interacts with DYM. Glycosylated. In terms of processing, phosphorylation sites are present in the extracellular medium.

It is found in the golgi apparatus. The protein resides in the cis-Golgi network membrane. Functionally, unknown. Cellular response protein to viral infection. This chain is Golgi membrane protein 1 (Golm1), found in Mus musculus (Mouse).